Consider the following 470-residue polypeptide: MNPNQKIITIGSICMAIGIISLILQIGNIISIWVSHSIQTGSQNHTGICNQRIITYENSTWVNQTYVNISNTNVVAGKDTTSMTLAGNSSLCPIRGWAIYSKDNSIRIGSKGDVFVIREPFISCSHLECRTFFLTQGALLNDKHSNGTVKDRSPYRALMSCPIGEAPCPYNSRFESVAWSASACHDGMGWLTIGISGPDDGAVAVLKYNGIITETIKSWRKQILRTQESECVCVNGSCFTIMTDGPSDGPASYRIFKIEKGKITKSIELDAPNSHYEECSCYPDTGTVMCVCRDNWHGSNRPWVSFNQNLDYQIGYICSGVFGDNPRPKDGKGSCDPVNVDGADGIKGFSYRYGNGVWIGRTKSNSSRKGFEMIWDPNGWTDTDSNFLVKQDVVAMTDWSGYSGSFVQHPELTGLDCMRPCFWVELIRGRPREKTTIWTSGSSISFCGVNSDTVNWSWPDGAELPFTIDK.

At 1–6 (MNPNQK) the chain is on the intravirion side. Residues 7–27 (IITIGSICMAIGIISLILQIG) traverse the membrane as a helical segment. The involved in apical transport and lipid raft association stretch occupies residues 11–33 (GSICMAIGIISLILQIGNIISIW). Over 28–470 (NIISIWVSHS…GAELPFTIDK (443 aa)) the chain is Virion surface. Residues 36–90 (HSIQTGSQNHTGICNQRIITYENSTWVNQTYVNISNTNVVAGKDTTSMTLAGNSS) form a hypervariable stalk region region. Asparagine 44, asparagine 58, asparagine 63, asparagine 68, and asparagine 88 each carry an N-linked (GlcNAc...) asparagine; by host glycan. Residues 91–470 (LCPIRGWAIY…GAELPFTIDK (380 aa)) are head of neuraminidase. Intrachain disulfides connect cysteine 92–cysteine 417, cysteine 124–cysteine 129, cysteine 184–cysteine 231, cysteine 233–cysteine 238, cysteine 279–cysteine 292, cysteine 281–cysteine 290, cysteine 318–cysteine 335, and cysteine 421–cysteine 447. Arginine 118 provides a ligand contact to substrate. N-linked (GlcNAc...) asparagine; by host glycosylation is present at asparagine 146. The Proton donor/acceptor role is filled by aspartate 151. Substrate is bound at residue arginine 152. Asparagine 235 carries an N-linked (GlcNAc...) asparagine; by host glycan. 277-278 (EE) lines the substrate pocket. Arginine 293 is a binding site for substrate. Ca(2+)-binding residues include aspartate 294, glycine 298, and aspartate 324. The N-linked (GlcNAc...) asparagine; by host glycan is linked to asparagine 365. Arginine 368 contacts substrate. The active-site Nucleophile is tyrosine 402. Residue asparagine 455 is glycosylated (N-linked (GlcNAc...) asparagine; by host).

It belongs to the glycosyl hydrolase 34 family. Homotetramer. Ca(2+) serves as cofactor. N-glycosylated.

Its subcellular location is the virion membrane. It localises to the host apical cell membrane. The enzyme catalyses Hydrolysis of alpha-(2-&gt;3)-, alpha-(2-&gt;6)-, alpha-(2-&gt;8)- glycosidic linkages of terminal sialic acid residues in oligosaccharides, glycoproteins, glycolipids, colominic acid and synthetic substrates.. With respect to regulation, inhibited by the neuraminidase inhibitors zanamivir (Relenza) and oseltamivir (Tamiflu). These drugs interfere with the release of progeny virus from infected cells and are effective against all influenza strains. Resistance to neuraminidase inhibitors is quite rare. Catalyzes the removal of terminal sialic acid residues from viral and cellular glycoconjugates. Cleaves off the terminal sialic acids on the glycosylated HA during virus budding to facilitate virus release. Additionally helps virus spread through the circulation by further removing sialic acids from the cell surface. These cleavages prevent self-aggregation and ensure the efficient spread of the progeny virus from cell to cell. Otherwise, infection would be limited to one round of replication. Described as a receptor-destroying enzyme because it cleaves a terminal sialic acid from the cellular receptors. May facilitate viral invasion of the upper airways by cleaving the sialic acid moieties on the mucin of the airway epithelial cells. Likely to plays a role in the budding process through its association with lipid rafts during intracellular transport. May additionally display a raft-association independent effect on budding. Plays a role in the determination of host range restriction on replication and virulence. Sialidase activity in late endosome/lysosome traffic seems to enhance virus replication. The sequence is that of Neuraminidase from Aves (Human).